A 251-amino-acid polypeptide reads, in one-letter code: uncharacterized protein (251 aa).

Its subcellular location is the mitochondrion. This is an uncharacterized protein from Arabidopsis thaliana (Mouse-ear cress).